A 72-amino-acid polypeptide reads, in one-letter code: Translation initiation factor IF-1 (72 aa).

The region spanning 1–72 (MAKDDVIEVD…DKGRITYRHK (72 aa)) is the S1-like domain.

This sequence belongs to the IF-1 family. Component of the 30S ribosomal translation pre-initiation complex which assembles on the 30S ribosome in the order IF-2 and IF-3, IF-1 and N-formylmethionyl-tRNA(fMet); mRNA recruitment can occur at any time during PIC assembly.

Its subcellular location is the cytoplasm. Its function is as follows. One of the essential components for the initiation of protein synthesis. Stabilizes the binding of IF-2 and IF-3 on the 30S subunit to which N-formylmethionyl-tRNA(fMet) subsequently binds. Helps modulate mRNA selection, yielding the 30S pre-initiation complex (PIC). Upon addition of the 50S ribosomal subunit IF-1, IF-2 and IF-3 are released leaving the mature 70S translation initiation complex. The chain is Translation initiation factor IF-1 from Helicobacter hepaticus (strain ATCC 51449 / 3B1).